The chain runs to 132 residues: Large ribosomal subunit protein bL17 (132 aa).

This sequence belongs to the bacterial ribosomal protein bL17 family. In terms of assembly, part of the 50S ribosomal subunit. Contacts protein L32.

This Ruthia magnifica subsp. Calyptogena magnifica protein is Large ribosomal subunit protein bL17.